We begin with the raw amino-acid sequence, 229 residues long: Urease accessory protein UreF (229 aa).

The protein belongs to the UreF family. UreD, UreF and UreG form a complex that acts as a GTP-hydrolysis-dependent molecular chaperone, activating the urease apoprotein by helping to assemble the nickel containing metallocenter of UreC. The UreE protein probably delivers the nickel.

Its subcellular location is the cytoplasm. In terms of biological role, required for maturation of urease via the functional incorporation of the urease nickel metallocenter. This is Urease accessory protein UreF from Staphylococcus epidermidis (strain ATCC 12228 / FDA PCI 1200).